The sequence spans 341 residues: Ferrochelatase (341 aa).

His189 and Glu293 together coordinate Fe cation.

It belongs to the ferrochelatase family.

Its subcellular location is the cytoplasm. The enzyme catalyses heme b + 2 H(+) = protoporphyrin IX + Fe(2+). It functions in the pathway porphyrin-containing compound metabolism; protoheme biosynthesis; protoheme from protoporphyrin-IX: step 1/1. Catalyzes the ferrous insertion into protoporphyrin IX. The sequence is that of Ferrochelatase from Pseudomonas fluorescens (strain Pf0-1).